Here is a 126-residue protein sequence, read N- to C-terminus: Cystatin-like protein (126 aa).

The Secondary area of contact motif lies at 72-76 (QVVAG). Cysteine 94 and cysteine 115 are disulfide-bonded.

Belongs to the cystatin family.

The polypeptide is Cystatin-like protein (Cys) (Drosophila melanogaster (Fruit fly)).